Here is a 120-residue protein sequence, read N- to C-terminus: Late histone H2A.2.2 (120 aa).

The span at 1–18 (MSGRGKGAKSKSKAKSRS) shows a compositional bias: basic residues. Positions 1-22 (MSGRGKGAKSKSKAKSRSSRAG) are disordered. Ser-2 carries the post-translational modification N-acetylserine. Ser-2 carries the post-translational modification Phosphoserine. Gln-104 is subject to N5-methylglutamine. Lys-119 is covalently cross-linked (Glycyl lysine isopeptide (Lys-Gly) (interchain with G-Cter in ubiquitin)).

This sequence belongs to the histone H2A family. As to quaternary structure, the nucleosome is a histone octamer containing two molecules each of H2A, H2B, H3 and H4 assembled in one H3-H4 heterotetramer and two H2A-H2B heterodimers. The octamer wraps approximately 147 bp of DNA. Post-translationally, monoubiquitination of Lys-119 gives a specific tag for epigenetic transcriptional repression. In terms of processing, phosphorylation of Ser-2 directly represses transcription.

Its subcellular location is the nucleus. The protein resides in the chromosome. In terms of biological role, core component of nucleosome. Nucleosomes wrap and compact DNA into chromatin, limiting DNA accessibility to the cellular machineries which require DNA as a template. Histones thereby play a central role in transcription regulation, DNA repair, DNA replication and chromosomal stability. DNA accessibility is regulated via a complex set of post-translational modifications of histones, also called histone code, and nucleosome remodeling. The sequence is that of Late histone H2A.2.2 from Psammechinus miliaris (Green sea urchin).